Reading from the N-terminus, the 407-residue chain is MEEEGSPDIIIVGAGISGLSTAVGLHRLGIRSMVLESSETLRATGFAFTTWFNAWKAMEALGVSQHIRSLHDRLEGWVVGTISAGTPPTEMLFPESEEYESRCVQRKLLLEALAGELPEETIRFSSKVVHIELSGCYKKVHLSDGTILKTKVLVGCDGVYSVVGKWLGFKNPATTARLAIRGLTHFPEGHGFGKRFFQFYGDGVRSGFIPCDHNTVYWFLTHTSTDIDEETNSEILKEFVLNKIKDLPENIKNVVETTDLDSMVMSQLKYRPPWELLWSNITKDNVCVAGDALHPMTPDIGQGGCSAMEDGVILARCLGEAIKAKSLKGETEENEEEGYKRIEEGLKKYAGERKWRSIDLITTAYTVGFIQQSRGKWMNMFRDRFLSSYLSRMLLKKSHFDCGSLVP.

Belongs to the 3-hydroxybenzoate 6-hydroxylase family. As to quaternary structure, monomer. Requires FAD as cofactor. Expressed in seeds, seedlings, roots, leaves, flowers, pollen and siliques.

The sequence is that of Monooxygenase 2 from Arabidopsis thaliana (Mouse-ear cress).